The following is a 1117-amino-acid chain: Protocadherin-11 X-linked (1117 aa).

The N-terminal stretch at 1–23 is a signal peptide; the sequence is MDLLSGTHIFAVLLACIVFQSGA. Residues 24–812 are Extracellular-facing; the sequence is QEKNYTIREE…ASSPSSDYVK (789 aa). Residues N27 and N48 are each glycosylated (N-linked (GlcNAc...) asparagine). Cadherin domains lie at 27–139, 140–249, 250–355, 362–466, 467–570, 571–673, and 677–795; these read NYTI…APLF, PATV…RPVF, KENE…IPSI, NPIN…APVF, TQPF…SPVF, THNE…KPVF, and SSNY…TPVT. N344 is a glycosylation site (N-linked (GlcNAc...) asparagine). N-linked (GlcNAc...) asparagine glycosylation occurs at N553. A helical membrane pass occupies residues 813–833; the sequence is IVVAIVAGTITVILVIFITAV. Residues 834-1117 are Cytoplasmic-facing; that stretch reads VRCQQSPHLK…DGNSDPESGK (284 aa). Polar residues predominate over residues 1029-1039; the sequence is TVEIWTHPQPQ. A disordered region spans residues 1029-1117; the sequence is TVEIWTHPQP…DGNSDPESGK (89 aa).

As to expression, expressed in adrenal gland, brain, heart, kidney, lung, prostate, skeletal muscle, testis and thymus.

It is found in the cell membrane. Its function is as follows. Potential calcium-dependent cell-adhesion protein. This chain is Protocadherin-11 X-linked (PCDH11X), found in Sus scrofa (Pig).